The following is a 281-amino-acid chain: Rhomboid protease AarA (281 aa).

Helical transmembrane passes span 16–36, 76–96, 105–125, 145–165, 185–205, 208–228, and 233–253; these read FSLG…AVYF, MLHS…VIGI, FKLL…SAYW, IGVG…IYLI, QLYN…QSGV, AAHI…ILVP, and VANL…IYLY. Ser-150 functions as the Nucleophile in the catalytic mechanism. The active-site Charge relay system is the His-210.

Belongs to the peptidase S54 family.

It is found in the cell membrane. It carries out the reaction Cleaves type-1 transmembrane domains using a catalytic dyad composed of serine and histidine that are contributed by different transmembrane domains.. Rhomboid serine protease that catalyzes intramembrane proteolysis. Mediates quorum-sensing and the subsequent regulation of target genes via activation of the Tat protein export system. Catalyzes the proteolytic activation of TatA by removal of its N-terminal extension. The protein is Rhomboid protease AarA (aarA) of Providencia stuartii.